The chain runs to 150 residues: UPF0336 protein SCO4636 (150 aa).

Positions 8 to 116 constitute a MaoC-like domain; the sequence is VGRSYPPTAP…STIEAIKSMA (109 aa).

Belongs to the UPF0336 family.

The polypeptide is UPF0336 protein SCO4636 (Streptomyces coelicolor (strain ATCC BAA-471 / A3(2) / M145)).